The following is a 95-amino-acid chain: Enhancer of yellow 2b transcription factor (95 aa).

Belongs to the ENY2 family. In terms of tissue distribution, expressed specifically in testis.

Its function is as follows. Testis-specific paralog of the ubiquitously expressed transcription and mRNA export factor e(y)2. Cannot functionally replace e(y)2. This chain is Enhancer of yellow 2b transcription factor (e(y)2b), found in Drosophila melanogaster (Fruit fly).